The chain runs to 377 residues: Glutamate 5-kinase (377 aa).

An ATP-binding site is contributed by Lys21. The substrate site is built by Ser61, Asp149, and Asn161. ATP is bound by residues 181-182 and 223-229; these read SD and SGGMTSK. Residues 286–363 enclose the PUA domain; that stretch reads RGSVQVDAGA…REHEELLGYA (78 aa).

It belongs to the glutamate 5-kinase family.

The protein localises to the cytoplasm. It catalyses the reaction L-glutamate + ATP = L-glutamyl 5-phosphate + ADP. It functions in the pathway amino-acid biosynthesis; L-proline biosynthesis; L-glutamate 5-semialdehyde from L-glutamate: step 1/2. Functionally, catalyzes the transfer of a phosphate group to glutamate to form L-glutamate 5-phosphate. The polypeptide is Glutamate 5-kinase (Novosphingobium aromaticivorans (strain ATCC 700278 / DSM 12444 / CCUG 56034 / CIP 105152 / NBRC 16084 / F199)).